A 419-amino-acid polypeptide reads, in one-letter code: CDP-diacylglycerol--serine O-phosphatidyltransferase 3 (419 aa).

Positions 1–51 are disordered; it reads MPVRRRWYPPSSTAAQPSPDGGDVNTDDADACPSSRQQRPPSLPQHSAPIH. The segment covering 33–47 has biased composition (low complexity); that stretch reads PSSRQQRPPSLPQHS. 7 consecutive transmembrane segments (helical) span residues 103–123, 142–162, 168–188, 260–280, 287–307, 359–379, and 384–404; these read PHTV…SGVL, WAMI…TILI, VWRL…FLLF, LLLW…RHML, WWDS…WAGM, FIQV…TFFL, and WIPP…LIAI.

The protein belongs to the CDP-alcohol phosphatidyltransferase class-I family.

The protein localises to the endoplasmic reticulum membrane. It catalyses the reaction a CDP-1,2-diacyl-sn-glycerol + L-serine = a 1,2-diacyl-sn-glycero-3-phospho-L-serine + CMP + H(+). Its pathway is phospholipid metabolism; phosphatidylethanolamine biosynthesis; phosphatidylethanolamine from CDP-diacylglycerol: step 1/2. In terms of biological role, catalyzes a base-exchange reaction in which the polar head group of phosphatidylethanolamine (PE) or phosphatidylcholine (PC) is replaced by L-serine. The protein is CDP-diacylglycerol--serine O-phosphatidyltransferase 3 (PSS3) of Oryza sativa subsp. japonica (Rice).